A 173-amino-acid chain; its full sequence is uncharacterized protein (173 aa).

A disordered region spans residues 1 to 23 (ELTSVAGSGRVDSTPLGSRGVTD).

In terms of tissue distribution, component of the acid-insoluble and acid-soluble organic matrix of calcified layers of the shell (at protein level).

The protein resides in the secreted. This is an uncharacterized protein from Lottia gigantea (Giant owl limpet).